The chain runs to 92 residues: Small ribosomal subunit protein uS19 (92 aa).

Belongs to the universal ribosomal protein uS19 family.

Protein S19 forms a complex with S13 that binds strongly to the 16S ribosomal RNA. This chain is Small ribosomal subunit protein uS19, found in Crocosphaera subtropica (strain ATCC 51142 / BH68) (Cyanothece sp. (strain ATCC 51142)).